The chain runs to 222 residues: Probable transaldolase (222 aa).

Lysine 91 (schiff-base intermediate with substrate) is an active-site residue.

This sequence belongs to the transaldolase family. Type 3B subfamily.

It localises to the cytoplasm. It catalyses the reaction D-sedoheptulose 7-phosphate + D-glyceraldehyde 3-phosphate = D-erythrose 4-phosphate + beta-D-fructose 6-phosphate. Its pathway is carbohydrate degradation; pentose phosphate pathway; D-glyceraldehyde 3-phosphate and beta-D-fructose 6-phosphate from D-ribose 5-phosphate and D-xylulose 5-phosphate (non-oxidative stage): step 2/3. Its function is as follows. Transaldolase is important for the balance of metabolites in the pentose-phosphate pathway. This Chlorobaculum tepidum (strain ATCC 49652 / DSM 12025 / NBRC 103806 / TLS) (Chlorobium tepidum) protein is Probable transaldolase.